Here is a 373-residue protein sequence, read N- to C-terminus: MRRELFRKIKRVVVKIGSRVLTDDEGALDMGVIGRICGDIASLRRQGRQVVLVSSGAIAAGRSELGMTEKPRTIPHKQAAAAIGQTRMMRAYEESFAPHGLKVAQVLLTREDLASRQRFLNARATLDALLGFGVIPVINENDTVVVEEIKFGDNDNLSALVTNVAEAGLLVIMTDIEGFYSADPRSNPDAVLVPLVQGITREIERAAGGSGSSVGTGGMATKVAAAKKAAKNGVPTIIVPGKREGIIATLMAGQEVGTLFLPLDACLNRRKHWLAYSLKPAGRIIVDDGAREVLLKKGKSLLPSGVLRVEGRFERGACVRVCGSDEQEFARGLSDYSSSEIARLAGQRSSRIEAILGYRYGDVIIHRDNLVVL.

Residue Lys15 participates in ATP binding. Ser55, Asp142, and Asn154 together coordinate substrate. ATP is bound by residues 174-175 and 216-222; these read TD and TGGMATK. The PUA domain maps to 281-359; sequence AGRIIVDDGA…SRIEAILGYR (79 aa).

The protein belongs to the glutamate 5-kinase family.

The protein resides in the cytoplasm. The catalysed reaction is L-glutamate + ATP = L-glutamyl 5-phosphate + ADP. It functions in the pathway amino-acid biosynthesis; L-proline biosynthesis; L-glutamate 5-semialdehyde from L-glutamate: step 1/2. Its function is as follows. Catalyzes the transfer of a phosphate group to glutamate to form L-glutamate 5-phosphate. The polypeptide is Glutamate 5-kinase (Pelobacter propionicus (strain DSM 2379 / NBRC 103807 / OttBd1)).